The chain runs to 665 residues: MGPLRESKKEQRVQHQEKEISRSRIPRLILRPHRPQQQQQQQNKVSPASESPFSEEESREFNPSSSGRSARTISSNSFCSDDTGCPSSQSVSPVKTPSDTGHSPIGFCPGSDEDFTRKKCRIGMVGEGSIQSARHKKEPKGGIIKPGSEADFSSSSSTGSISAPEVHMSTTGNKRASFSRNRGPHGRSNGASSHKSGSSPPSPREKDLVSMLCRNPLSPSNIHPSYAPSSPSSSNSGSYKGSDCSPVMRRSGRYMSCGENHGVKPPNPEQYLTPLQQKEVTVRHLRTKLKESERRLHERESEIMELKSQLARMREDWIEEECHRVEAQLALKEARKEIKQLKQVIETMRSSLADKDKGIQKYFVDINIQNKKLESLLQSMEMAHNSSLRDELCLDFSFDSPEKSLPLSSTFDKLPDGLSLEEQITEEGADSELLVGDSMAEGTDLLDEMVTATTTESSGLEFVHSTPGPQALKALPLVSHEEGIAVMEQAVQTDVVPFSPAISELIQSVLKLQDYCPTSSASPDESGADSMESFSESISALMLDLTPRSPNSAILLSPVEIPFSKGAMEAHANRLMRELDFAAYTEERLDSVLSLSQGSVVRQYWSSNFLVDLLAVAAPVVPTVLWAFSTQRGGTDPVYNIGALLRGCCVVALHSLRRTAFHMKT.

A compositionally biased stretch (basic and acidic residues) spans M1–R22. The tract at residues M1–Y271 is disordered. Residues G2 to E421 form a sufficient for interaction with KIF5B region. Over residues P35–P52 the composition is skewed to low complexity. The residue at position 54 (S54) is a Phosphoserine. The span at F61 to S77 shows a compositional bias: low complexity. A compositionally biased stretch (polar residues) spans C85–G101. A Phosphoserine modification is found at S111. Residues G141 to S162 show a composition bias toward low complexity. Polar residues predominate over residues M168–R180. The segment covering S225–S245 has biased composition (low complexity). Positions L275 to K357 form a coiled coil. The segment at R314 to E421 is sufficient for interaction with STX1A. Residues S400 and S557 each carry the phosphoserine modification. A helical transmembrane segment spans residues F609–S629.

In terms of assembly, interacts with STX1A and KIF5B.

Its subcellular location is the golgi apparatus membrane. Its function is as follows. Part of a kinesin motor-adapter complex that is critical for the anterograde axonal transport of active zone components and contributes to activity-dependent presynaptic assembly during neuronal development. The polypeptide is Syntabulin (Sybu) (Mus musculus (Mouse)).